A 422-amino-acid polypeptide reads, in one-letter code: Histidine--tRNA ligase (422 aa).

Belongs to the class-II aminoacyl-tRNA synthetase family. Homodimer.

The protein localises to the cytoplasm. It carries out the reaction tRNA(His) + L-histidine + ATP = L-histidyl-tRNA(His) + AMP + diphosphate + H(+). In Vibrio parahaemolyticus serotype O3:K6 (strain RIMD 2210633), this protein is Histidine--tRNA ligase.